A 688-amino-acid chain; its full sequence is Glycine--tRNA ligase beta subunit (688 aa).

The protein belongs to the class-II aminoacyl-tRNA synthetase family. In terms of assembly, tetramer of two alpha and two beta subunits.

It localises to the cytoplasm. The enzyme catalyses tRNA(Gly) + glycine + ATP = glycyl-tRNA(Gly) + AMP + diphosphate. The protein is Glycine--tRNA ligase beta subunit of Haemophilus influenzae (strain PittGG).